Consider the following 131-residue polypeptide: Large ribosomal subunit protein bL12 (131 aa).

The protein belongs to the bacterial ribosomal protein bL12 family. As to quaternary structure, homodimer. Part of the ribosomal stalk of the 50S ribosomal subunit. Forms a multimeric L10(L12)X complex, where L10 forms an elongated spine to which 2 to 4 L12 dimers bind in a sequential fashion. Binds GTP-bound translation factors.

Functionally, forms part of the ribosomal stalk which helps the ribosome interact with GTP-bound translation factors. Is thus essential for accurate translation. In Parasynechococcus marenigrum (strain WH8102), this protein is Large ribosomal subunit protein bL12.